A 239-amino-acid chain; its full sequence is Uridylate kinase (239 aa).

ATP is bound at residue 12 to 15 (KLSG). Residues 20–25 (GDQGYG) are involved in allosteric activation by GTP. Position 54 (glycine 54) interacts with UMP. Residues glycine 55 and arginine 59 each coordinate ATP. UMP is bound by residues aspartate 74 and 135 to 142 (TGNPYFTT). ATP is bound by residues threonine 162, tyrosine 168, and aspartate 171.

Belongs to the UMP kinase family. As to quaternary structure, homohexamer.

It is found in the cytoplasm. The enzyme catalyses UMP + ATP = UDP + ADP. The protein operates within pyrimidine metabolism; CTP biosynthesis via de novo pathway; UDP from UMP (UMPK route): step 1/1. Allosterically activated by GTP. Inhibited by UTP. Functionally, catalyzes the reversible phosphorylation of UMP to UDP. This chain is Uridylate kinase, found in Geobacter metallireducens (strain ATCC 53774 / DSM 7210 / GS-15).